The following is a 1164-amino-acid chain: Protein PLASTID MOVEMENT IMPAIRED 1-RELATED 1 (1164 aa).

Residues 30-54 (KNPRGSVAGSNKTPTKPLSRSNLAE) form a disordered region. Polar residues predominate over residues 37–51 (AGSNKTPTKPLSRSN). The region spanning 69–217 (INHVRNRRFN…TLSMSFGYTV (149 aa)) is the C2 NT-type domain. A compositionally biased stretch (polar residues) spans 224-263 (PASSGSTQNFRSSSNVKQTSNNTGLTRAISAKSSLGNGKS). 4 disordered regions span residues 224–268 (PASS…SRRY), 466–486 (APEEGNKISPKNEESVVPKDA), 1038–1063 (SELKKTDEEEEADASDAKKEEKPMEE), and 1124–1164 (GSAK…IMPK). Composition is skewed to basic and acidic residues over residues 469–486 (EGNKISPKNEESVVPKDA) and 1052–1062 (SDAKKEEKPME).

The protein resides in the cytoplasm. In terms of biological role, together with PMI1, necessary for chloroplast and nuclear photorelocation movements via the regulation of chloroplast-actin (cp-actin) filaments in pavement cells. In Arabidopsis thaliana (Mouse-ear cress), this protein is Protein PLASTID MOVEMENT IMPAIRED 1-RELATED 1.